The following is a 294-amino-acid chain: Urease accessory protein UreD 1 (294 aa).

A disordered region spans residues 1–20; it reads MALSLDDLPEKPAPAEPVSA.

It belongs to the UreD family. In terms of assembly, ureD, UreF and UreG form a complex that acts as a GTP-hydrolysis-dependent molecular chaperone, activating the urease apoprotein by helping to assemble the nickel containing metallocenter of UreC. The UreE protein probably delivers the nickel.

The protein localises to the cytoplasm. In terms of biological role, required for maturation of urease via the functional incorporation of the urease nickel metallocenter. This chain is Urease accessory protein UreD 1, found in Methylorubrum populi (strain ATCC BAA-705 / NCIMB 13946 / BJ001) (Methylobacterium populi).